Here is a 511-residue protein sequence, read N- to C-terminus: Aprataxin and PNK-like factor (511 aa).

Residues 1 to 108 (MSGGFELQPR…RILSIPSEVE (108 aa)) enclose the FHA-like domain. S116 is subject to Phosphoserine; by ATM. S149 carries the phosphoserine modification. A KBM motif is present at residues 182-191 (RKRILPTWML). A disordered region spans residues 223–370 (KSQLNTTQQG…ATDSVLQGSE (148 aa)). Polar residues-rich tracts occupy residues 225–249 (QLNT…SAEQ) and 263–293 (STIS…NAQR). Residues 304-315 (VSKHKIATKRTP) are compositionally biased toward basic residues. Polar residues predominate over residues 324–344 (CSENCSSAQGDSLQDESQGSH). Over residues 345–355 (SESSSNPSNPE) the composition is skewed to low complexity. A glycoprotein is bound by residues R376, Y381, Y386, and R387. The PBZ-type 1 zinc finger occupies 377-398 (TSCMYGANCYRKNPVHFQHFSH). A flexible linker region spans residues 406 to 416 (GVQIVGQDETD). The PBZ-type 2 zinc-finger motif lies at 419–440 (PECPYGPSCYRKNPQHKIEYRH). Y423, Y428, and R429 together coordinate a glycoprotein. Positions 449–497 (LDEDNDNVGQPNEYDLNDSFLDDEEEDYEPTDEDSDWEPGKEDEEKEDV) are disordered. Residues 468 to 497 (FLDDEEEDYEPTDEDSDWEPGKEDEEKEDV) show a composition bias toward acidic residues. Positions 476–500 (YEPTDEDSDWEPGKEDEEKEDVEEL) match the NAP1L motif motif. A coiled-coil region spans residues 487 to 511 (PGKEDEEKEDVEELLKEAKRFMKRK).

Belongs to the APLF family. Interacts with LIG4. Interacts with PARP1. Interacts with XRCC4. Interacts (via KBM motif) with XRCC5 and XRCC6; promoting recruitment to DNA damage sites. Interacts with XRCC1. Interacts (via C-terminal disordered region) with histones; interacts with histone H2A, H2B and H3-H4. Poly-ADP-ribosylated. In addition to binding non covalently poly-ADP-ribose via its PBZ-type zinc fingers, the protein is also covalently poly-ADP-ribosylated by PARP1. Post-translationally, phosphorylated in an ATM-dependent manner upon double-strand DNA break.

It is found in the nucleus. It localises to the chromosome. The protein resides in the cytoplasm. The protein localises to the cytosol. Its function is as follows. Histone chaperone involved in single-strand and double-strand DNA break repair. Recruited to sites of DNA damage through interaction with branched poly-ADP-ribose chains, a polymeric post-translational modification synthesized transiently at sites of chromosomal damage to accelerate DNA strand break repair reactions. Following recruitment to DNA damage sites, acts as a histone chaperone that mediates histone eviction during DNA repair and promotes recruitment of histone variant MACROH2A1. Also has a nuclease activity: displays apurinic-apyrimidinic (AP) endonuclease and 3'-5' exonuclease activities in vitro. Also able to introduce nicks at hydroxyuracil and other types of pyrimidine base damage. Together with PARP3, promotes the retention of the LIG4-XRCC4 complex on chromatin and accelerate DNA ligation during non-homologous end-joining (NHEJ). Also acts as a negative regulator of cell pluripotency by promoting histone exchange. Required for the embryo implantation during the epithelial to mesenchymal transition in females. This chain is Aprataxin and PNK-like factor, found in Homo sapiens (Human).